A 221-amino-acid chain; its full sequence is 7-cyano-7-deazaguanine synthase (221 aa).

8 to 18 (MSGGMDSTLCA) is an ATP binding site. Residues Cys187, Cys195, Cys198, and Cys201 each coordinate Zn(2+).

The protein belongs to the QueC family. The cofactor is Zn(2+).

The enzyme catalyses 7-carboxy-7-deazaguanine + NH4(+) + ATP = 7-cyano-7-deazaguanine + ADP + phosphate + H2O + H(+). Its pathway is purine metabolism; 7-cyano-7-deazaguanine biosynthesis. Its function is as follows. Catalyzes the ATP-dependent conversion of 7-carboxy-7-deazaguanine (CDG) to 7-cyano-7-deazaguanine (preQ(0)). The polypeptide is 7-cyano-7-deazaguanine synthase (Campylobacter concisus (strain 13826)).